Reading from the N-terminus, the 161-residue chain is 6,7-dimethyl-8-ribityllumazine synthase (161 aa).

5-amino-6-(D-ribitylamino)uracil is bound by residues Trp26, 58 to 60, and 81 to 83; these read SFE and VVI. 86–87 serves as a coordination point for (2S)-2-hydroxy-3-oxobutyl phosphate; it reads GT. Catalysis depends on His89, which acts as the Proton donor. Residue Phe114 participates in 5-amino-6-(D-ribitylamino)uracil binding. Arg128 is a binding site for (2S)-2-hydroxy-3-oxobutyl phosphate.

Belongs to the DMRL synthase family.

The enzyme catalyses (2S)-2-hydroxy-3-oxobutyl phosphate + 5-amino-6-(D-ribitylamino)uracil = 6,7-dimethyl-8-(1-D-ribityl)lumazine + phosphate + 2 H2O + H(+). The protein operates within cofactor biosynthesis; riboflavin biosynthesis; riboflavin from 2-hydroxy-3-oxobutyl phosphate and 5-amino-6-(D-ribitylamino)uracil: step 1/2. Its function is as follows. Catalyzes the formation of 6,7-dimethyl-8-ribityllumazine by condensation of 5-amino-6-(D-ribitylamino)uracil with 3,4-dihydroxy-2-butanone 4-phosphate. This is the penultimate step in the biosynthesis of riboflavin. In Streptomyces avermitilis (strain ATCC 31267 / DSM 46492 / JCM 5070 / NBRC 14893 / NCIMB 12804 / NRRL 8165 / MA-4680), this protein is 6,7-dimethyl-8-ribityllumazine synthase.